A 149-amino-acid chain; its full sequence is Oligosaccharyltransferase complex subunit ostc-A (149 aa).

At 1-32 (MESLYRVPFTVLECPNLKLKKPSWLHMPSAMT) the chain is on the cytoplasmic side. The chain crosses the membrane as a helical span at residues 33-53 (VYAMVVVSYFLITGGIIYDVI). Over 54 to 83 (VEPPSVGSMTDEHGHQRPVAFLAYRVNGQY) the chain is Extracellular. The chain crosses the membrane as a helical span at residues 84 to 104 (IMEGLASSFLFTMGGLGFIIL). The Cytoplasmic segment spans residues 105–117 (DRSNTPNIPKLNR). A helical transmembrane segment spans residues 118–138 (FLLLFIGFVCVLLSFFMARVF). Residues 139–149 (MRMKLPGYLMG) are Extracellular-facing.

Belongs to the OSTC family. Specific component of the STT3A-containing form of the oligosaccharyltransferase (OST) complex.

Its subcellular location is the membrane. It functions in the pathway protein modification; protein glycosylation. Functionally, specific component of the STT3A-containing form of the oligosaccharyl transferase (OST) complex that catalyzes the initial transfer of a defined glycan (Glc(3)Man(9)GlcNAc(2) in eukaryotes) from the lipid carrier dolichol-pyrophosphate to an asparagine residue within an Asn-X-Ser/Thr consensus motif in nascent polypeptide chains, the first step in protein N-glycosylation. N-glycosylation occurs cotranslationally and the complex associates with the Sec61 complex at the channel-forming translocon complex that mediates protein translocation across the endoplasmic reticulum (ER). All subunits are required for a maximal enzyme activity. This chain is Oligosaccharyltransferase complex subunit ostc-A, found in Xenopus laevis (African clawed frog).